The following is a 541-amino-acid chain: uncharacterized protein (541 aa).

The tat-type signal signal peptide spans 1–55 (MTKTVTRAGGASGPQQFQSGGETMKYEITRRRFLAASSAVLAAPAIVTMVRPARA). The segment at 339–362 (RRSPSGISSPRSNRQPKAEALSAR) is disordered. The segment covering 341–351 (SPSGISSPRSN) has biased composition (low complexity). Transmembrane regions (helical) follow at residues 379–399 (AIVW…MVFM), 420–440 (LPVL…AHSG), 466–486 (LVSA…GEIA), and 500–520 (VGYF…LAVA).

It belongs to the bacterial solute-binding protein 7 family. In terms of processing, predicted to be exported by the Tat system. The position of the signal peptide cleavage has not been experimentally proven.

Its subcellular location is the cell membrane. This is an uncharacterized protein from Sinorhizobium fredii (strain NBRC 101917 / NGR234).